Consider the following 971-residue polypeptide: Isoleucine--tRNA ligase (971 aa).

A 'HIGH' region motif is present at residues 64-74 (PYANGHIHIGH). Glu-602 serves as a coordination point for L-isoleucyl-5'-AMP. A 'KMSKS' region motif is present at residues 643 to 647 (KMSKS). Lys-646 lines the ATP pocket.

The protein belongs to the class-I aminoacyl-tRNA synthetase family. IleS type 1 subfamily. As to quaternary structure, monomer.

The protein resides in the cytoplasm. The catalysed reaction is tRNA(Ile) + L-isoleucine + ATP = L-isoleucyl-tRNA(Ile) + AMP + diphosphate. In terms of biological role, catalyzes the attachment of isoleucine to tRNA(Ile). As IleRS can inadvertently accommodate and process structurally similar amino acids such as valine, to avoid such errors it has two additional distinct tRNA(Ile)-dependent editing activities. One activity is designated as 'pretransfer' editing and involves the hydrolysis of activated Val-AMP. The other activity is designated 'posttransfer' editing and involves deacylation of mischarged Val-tRNA(Ile). The sequence is that of Isoleucine--tRNA ligase from Bartonella quintana (strain Toulouse) (Rochalimaea quintana).